The chain runs to 133 residues: ATP synthase epsilon chain (133 aa).

It belongs to the ATPase epsilon chain family. As to quaternary structure, F-type ATPases have 2 components, CF(1) - the catalytic core - and CF(0) - the membrane proton channel. CF(1) has five subunits: alpha(3), beta(3), gamma(1), delta(1), epsilon(1). CF(0) has three main subunits: a, b and c.

The protein resides in the cell membrane. Its function is as follows. Produces ATP from ADP in the presence of a proton gradient across the membrane. This is ATP synthase epsilon chain from Bacillus cereus (strain ATCC 14579 / DSM 31 / CCUG 7414 / JCM 2152 / NBRC 15305 / NCIMB 9373 / NCTC 2599 / NRRL B-3711).